Here is a 222-residue protein sequence, read N- to C-terminus: UPF0758 protein Cag_1513 (222 aa).

The region spanning 100-222 (KIMAAGDVFE…WYSFRERGLL (123 aa)) is the MPN domain. Zn(2+) is bound by residues His171, His173, and Asp184. A JAMM motif motif is present at residues 171–184 (HNHPSGDVNPSNAD).

The protein belongs to the UPF0758 family.

This Chlorobium chlorochromatii (strain CaD3) protein is UPF0758 protein Cag_1513.